A 488-amino-acid chain; its full sequence is Annexin A7 (488 aa).

Residues M1–P18 show a composition bias toward pro residues. Disordered regions lie at residues M1–V49 and G71–S150. The repeat-rich region stretch occupies residues M1–P143. Positions G5–A20 are 3 X 5 AA tandem repeats of G-Y-P-P-X. The segment covering P89 to F102 has biased composition (gly residues). Annexin repeat units follow at residues F185–M256, P257–Q328, Q340–Q412, and N416–G487. Position 233 is an N6-acetyllysine (K233).

Belongs to the annexin family. As to quaternary structure, interacts with PDCD6.

Functionally, calcium/phospholipid-binding protein which promotes membrane fusion and is involved in exocytosis. The polypeptide is Annexin A7 (ANXA7) (Macaca fascicularis (Crab-eating macaque)).